Consider the following 75-residue polypeptide: MQKKVKVKPNSKQQKIAEQDDGSLTVHLKSPPVDGKANEELIKLLAEKFAVPKSHITIKSGLSSRQKLIEIDTDI.

A disordered region spans residues 1–32; that stretch reads MQKKVKVKPNSKQQKIAEQDDGSLTVHLKSPP.

It belongs to the UPF0235 family.

The protein is UPF0235 protein Ava_3894 of Trichormus variabilis (strain ATCC 29413 / PCC 7937) (Anabaena variabilis).